A 361-amino-acid polypeptide reads, in one-letter code: Elongator complex protein 4 (361 aa).

Disordered regions lie at residues 93–124 (QLPG…PQQE) and 338–361 (DDEQ…SLDF). 2 stretches are compositionally biased toward polar residues: residues 104–121 (NENS…SKNP) and 346–355 (ISNTNPQKQP).

It belongs to the ELP4 family. As to quaternary structure, component of the elongator complex.

It is found in the cytoplasm. It localises to the nucleus. The protein operates within tRNA modification; 5-methoxycarbonylmethyl-2-thiouridine-tRNA biosynthesis. Its function is as follows. Component of the elongator complex, a multiprotein complex which is required for multiple tRNA modifications, including mcm5U (5-methoxycarbonylmethyl uridine), mcm5s2U (5-methoxycarbonylmethyl-2-thiouridine), and ncm5U (5-carbamoylmethyl uridine). The elongator complex catalyzes formation of carboxymethyluridine in the wobble base at position 34 in tRNAs. This Schizosaccharomyces pombe (strain 972 / ATCC 24843) (Fission yeast) protein is Elongator complex protein 4.